The following is a 705-amino-acid chain: MHRYCRVGFRDEHRISHLTASTMAKKHRDDFVMTIDSDSEASDGGDSDTEQKTGDLNPDFVFGEAEETAFTGWDLDQKDVANHKDVDLDGILRSKGGLSGMIDGEEEEQKEEEEENEDNAEDEEEVNAGEDDEDLAMDGFGMGAEQEDDEEEENSEQENEHEAESEDEQEQEISENDEDSAAAIAEFYEESKTTEKITSFQALQLSRPLLKGVGNLGYTVPSAIQAASIPIAMMGKDIVAGAVTGSGKTAAYLIPIIERLIYKPAAVSATRVIVLTPTRELAIQVCDVGKKLGQFVANLNFGLAVGGLNLRQQEQQLKSRPDIVVATPGRLIDHIRNSPSFSIENLEVLVMDEADRMLEEGFQVELTEILELIPKHKRQTMLFSATMNTKIQDLIQLSLDKPVRIMVNPPKQAASKLVQEFVRIRKREHLKPALLYHLLRLVDPQQQNRIVVFVSRKEMAHRLRIVLGLLGMKVSELHGSLTQEQRLQSVKDFRSLAVPVLICTDLAARGLDIPKIEIVINFDMPKTHEIYLHRVGRTARAGREGRSITFVGESNQDRSIVKDAIKSLEEQKNGKAVSRTVDWKKVEELNSIVESKKDTIDEVLEEEKSAKEILQAEMQLEKASNIMKHEKEIHSRPKRTWFQSEQEKKQAQRTPVMQSLTKHGKKVNSKKRKAHEERKEEKRSYKKTKSDRSAPKTKAKSKKRK.

Disordered regions lie at residues 36–56 (DSDSEASDGGDSDTEQKTGDL) and 90–178 (GILR…ENDE). 3 stretches are compositionally biased toward acidic residues: residues 37–48 (SDSEASDGGDSD), 103–136 (DGEEEEQKEEEEENEDNAEDEEEVNAGEDDEDLA), and 145–178 (EQEDDEEEENSEQENEHEAESEDEQEQEISENDE). The stretch at 97-178 (GLSGMIDGEE…QEQEISENDE (82 aa)) forms a coiled coil. Residues 198-226 (TSFQALQLSRPLLKGVGNLGYTVPSAIQA) carry the Q motif motif. In terms of domain architecture, Helicase ATP-binding spans 229 to 405 (IPIAMMGKDI…QLSLDKPVRI (177 aa)). 242–249 (AVTGSGKT) is an ATP binding site. A DEAD box motif is present at residues 352-355 (DEAD). Residues 416-588 (KLVQEFVRIR…RTVDWKKVEE (173 aa)) form the Helicase C-terminal domain. The interval 631–705 (KEIHSRPKRT…KTKAKSKKRK (75 aa)) is disordered. Over residues 652–661 (QRTPVMQSLT) the composition is skewed to polar residues. Residues 662–673 (KHGKKVNSKKRK) show a composition bias toward basic residues. The segment covering 674 to 694 (AHEERKEEKRSYKKTKSDRSA) has biased composition (basic and acidic residues). Residues 695–705 (PKTKAKSKKRK) are compositionally biased toward basic residues.

It belongs to the DEAD box helicase family. DDX27/DRS1 subfamily. Associates with pre-ribosomal particles.

It is found in the nucleus. Its subcellular location is the nucleolus. The catalysed reaction is ATP + H2O = ADP + phosphate + H(+). Functionally, ATP-binding RNA helicase involved in ribosome assembly. This chain is ATP-dependent RNA helicase DRS1 (DRS1), found in Meyerozyma guilliermondii (strain ATCC 6260 / CBS 566 / DSM 6381 / JCM 1539 / NBRC 10279 / NRRL Y-324) (Yeast).